A 528-amino-acid chain; its full sequence is Peptide chain release factor 3 (528 aa).

Positions 11 to 279 constitute a tr-type G domain; sequence SRRRTFAIIS…GLVDWAPSPQ (269 aa). GTP-binding positions include 20-27, 88-92, and 142-145; these read SHPDAGKT, DTPGH, and NKLD.

This sequence belongs to the TRAFAC class translation factor GTPase superfamily. Classic translation factor GTPase family. PrfC subfamily.

The protein resides in the cytoplasm. Increases the formation of ribosomal termination complexes and stimulates activities of RF-1 and RF-2. It binds guanine nucleotides and has strong preference for UGA stop codons. It may interact directly with the ribosome. The stimulation of RF-1 and RF-2 is significantly reduced by GTP and GDP, but not by GMP. The sequence is that of Peptide chain release factor 3 from Pseudoalteromonas atlantica (strain T6c / ATCC BAA-1087).